The following is a 379-amino-acid chain: Galactose-1-phosphate uridylyltransferase (379 aa).

A disordered region spans residues 1 to 21 (MSRSGTDPQQRQQASEADAAA). Over residues 9 to 21 (QQRQQASEADAAA) the composition is skewed to low complexity. Cysteine 75 contacts Zn(2+). UDP-alpha-D-glucose contacts are provided by residues alanine 81, 97–98 (ND), and asparagine 173. A Zn(2+)-binding site is contributed by histidine 184. Histidine 186 serves as the catalytic Tele-UMP-histidine intermediate. Glutamine 188 serves as a coordination point for UDP-alpha-D-glucose. Positions 202, 301, 319, and 321 each coordinate Zn(2+). Residues 334 to 337 (KFMV) and 339 to 340 (YE) each bind UDP-alpha-D-glucose.

It belongs to the galactose-1-phosphate uridylyltransferase type 1 family. In terms of assembly, homodimer. It depends on Zn(2+) as a cofactor.

The enzyme catalyses alpha-D-galactose 1-phosphate + UDP-alpha-D-glucose = alpha-D-glucose 1-phosphate + UDP-alpha-D-galactose. It functions in the pathway carbohydrate metabolism; galactose metabolism. Its function is as follows. Plays an important role in galactose metabolism. This is Galactose-1-phosphate uridylyltransferase (GALT) from Homo sapiens (Human).